Here is a 787-residue protein sequence, read N- to C-terminus: Alpha-glucosidase 2 (787 aa).

Residues D407 and E410 contribute to the active site. The Proton donor role is filled by D484.

This sequence belongs to the glycosyl hydrolase 31 family. Homohexamer.

The enzyme catalyses Hydrolysis of terminal, non-reducing (1-&gt;4)-linked alpha-D-glucose residues with release of alpha-D-glucose.. The protein is Alpha-glucosidase 2 of Bacillus thermoamyloliquefaciens.